The primary structure comprises 89 residues: Neurotoxin beta-KTx 52.1 (89 aa).

Residues 1–20 (MKQYIFFLALIVLTATFAEA) form the signal peptide. The propeptide occupies 21–39 (GKKTEILDKVKKVFSKAKD). One can recognise a BetaSPN-type CS-alpha/beta domain in the interval 53-89 (ELGCPFIDKWCEDHCDSKKLVGKCENFDCSCVKLGGK). Cystine bridges form between Cys-56/Cys-76, Cys-63/Cys-81, and Cys-67/Cys-83.

It belongs to the long chain scorpion toxin family. Class 2 subfamily. In terms of tissue distribution, expressed by the venom gland.

It localises to the secreted. Functionally, inhibits voltage-gated potassium channel. The protein is Neurotoxin beta-KTx 52.1 of Lychas mucronatus (Chinese swimming scorpion).